A 329-amino-acid polypeptide reads, in one-letter code: Glycerol-3-phosphate dehydrogenase [NAD(P)+] (329 aa).

NADPH contacts are provided by Y14, R34, and K108. 3 residues coordinate sn-glycerol 3-phosphate: K108, G137, and S139. Residue A141 coordinates NADPH. Sn-glycerol 3-phosphate contacts are provided by K192, D245, S255, R256, and N257. K192 serves as the catalytic Proton acceptor. Residue R256 participates in NADPH binding. NADPH-binding residues include I280 and E282.

This sequence belongs to the NAD-dependent glycerol-3-phosphate dehydrogenase family.

It is found in the cytoplasm. It catalyses the reaction sn-glycerol 3-phosphate + NAD(+) = dihydroxyacetone phosphate + NADH + H(+). The catalysed reaction is sn-glycerol 3-phosphate + NADP(+) = dihydroxyacetone phosphate + NADPH + H(+). The protein operates within membrane lipid metabolism; glycerophospholipid metabolism. In terms of biological role, catalyzes the reduction of the glycolytic intermediate dihydroxyacetone phosphate (DHAP) to sn-glycerol 3-phosphate (G3P), the key precursor for phospholipid synthesis. In Wigglesworthia glossinidia brevipalpis, this protein is Glycerol-3-phosphate dehydrogenase [NAD(P)+].